The chain runs to 300 residues: Hemagglutinin 1 (300 aa).

The chain crosses the membrane as a helical span at residues 200–221 (FIFATVVFIFLQAGRVPEIIAD).

It localises to the cell membrane. Functionally, induces agglutination of neuraminidase-treated erythrocytes. The polypeptide is Hemagglutinin 1 (hag1) (Eikenella corrodens).